Reading from the N-terminus, the 264-residue chain is MGQKIHPTGFRLAVSRNWASRWYASNTQFAGMLKEDIEVREFLKKKLKNASVGRVVIERPAKNARITIYSSRPGVVIGKKGEDIELLKAELQRRMGVPVHVNIEEIRKPEVDAQLIADSITQQLERRIMFRRAMKRAMQNAMRLGAQGIKIMSSGRLNGIEIARTEWYREGRVPLHTLRADIDYGFSEAETTYGIIGVKVWVYKGDHLGRNDAPVVEEPQEERRKRPGRPEGRRREGEGRPGGQRRGAGAGGRRSGGADAKTGE.

The KH type-2 domain maps to 39–107; that stretch reads VREFLKKKLK…PVHVNIEEIR (69 aa). Residues 211–264 are disordered; the sequence is NDAPVVEEPQEERRKRPGRPEGRRREGEGRPGGQRRGAGAGGRRSGGADAKTGE. A compositionally biased stretch (basic and acidic residues) spans 221–239; it reads EERRKRPGRPEGRRREGEG. Residues 240–255 show a composition bias toward gly residues; it reads RPGGQRRGAGAGGRRS.

This sequence belongs to the universal ribosomal protein uS3 family. Part of the 30S ribosomal subunit. Forms a tight complex with proteins S10 and S14.

Functionally, binds the lower part of the 30S subunit head. Binds mRNA in the 70S ribosome, positioning it for translation. The polypeptide is Small ribosomal subunit protein uS3 (Ralstonia nicotianae (strain ATCC BAA-1114 / GMI1000) (Ralstonia solanacearum)).